The following is a 192-amino-acid chain: Phosphomevalonate kinase (192 aa).

ATP is bound by residues 17 to 23 (KRKSGKD) and arginine 141. A substrate-binding site is contributed by asparagine 170. ATP is bound by residues histidine 171, arginine 176, and glutamine 180.

In terms of assembly, monomer. In terms of tissue distribution, heart, liver, skeletal muscle, kidney, and pancreas. Lower level in brain, placenta and lung.

It localises to the cytoplasm. The protein resides in the cytosol. It carries out the reaction (R)-5-phosphomevalonate + ATP = (R)-5-diphosphomevalonate + ADP. It participates in isoprenoid biosynthesis; isopentenyl diphosphate biosynthesis via mevalonate pathway; isopentenyl diphosphate from (R)-mevalonate: step 2/3. In terms of biological role, catalyzes the reversible ATP-dependent phosphorylation of mevalonate 5-phosphate to produce mevalonate diphosphate and ADP, a key step in the mevalonic acid mediated biosynthesis of isopentenyl diphosphate and other polyisoprenoid metabolites. The sequence is that of Phosphomevalonate kinase (PMVK) from Homo sapiens (Human).